The sequence spans 295 residues: MVFLSGNASDSSNCTHPPAPVNISKAILLGVILGGLIIFGVLGNILVILSVACHRHLHSVTHYYIVNLAVADLLLTSTVLPFSAIFEILGYWAFGRVFCNIWAAVDVLCCTASIMGLCIISIDRYIGVSYPLRYPTIVTQKRGLMALLCVWALSLVISIGPLFGWRQPAPEDETICQITEEPGYVLFSALGSFYVPLTIILVMYCRVYVVAKRESRGLKSGLKTDKSDSEQVTLRIHRKNAPVGGTGVSSAKNKTHFSVRLLKFSREKKAAKTLGIVVGCFVLCWLPFFLVMPIG.

Residues 1–27 (MVFLSGNASDSSNCTHPPAPVNISKAI) are Extracellular-facing. N-linked (GlcNAc...) asparagine glycosylation is found at N7, N13, and N22. Residues 28 to 51 (LLGVILGGLIIFGVLGNILVILSV) form a helical membrane-spanning segment. Residues 52–64 (ACHRHLHSVTHYY) lie on the Cytoplasmic side of the membrane. Residues 65 to 88 (IVNLAVADLLLTSTVLPFSAIFEI) traverse the membrane as a helical segment. Residues 89 to 99 (LGYWAFGRVFC) are Extracellular-facing. Residues C99 and C176 are joined by a disulfide bond. Residues 100 to 122 (NIWAAVDVLCCTASIMGLCIISI) traverse the membrane as a helical segment. Residues 123-143 (DRYIGVSYPLRYPTIVTQKRG) lie on the Cytoplasmic side of the membrane. The helical transmembrane segment at 144-167 (LMALLCVWALSLVISIGPLFGWRQ) threads the bilayer. Residues 168 to 181 (PAPEDETICQITEE) are Extracellular-facing. Residues 182 to 205 (PGYVLFSALGSFYVPLTIILVMYC) traverse the membrane as a helical segment. The Cytoplasmic portion of the chain corresponds to 206–273 (RVYVVAKRES…FSREKKAAKT (68 aa)). A Phosphoserine; by PKA modification is found at S215. A helical membrane pass occupies residues 274–295 (LGIVVGCFVLCWLPFFLVMPIG).

It belongs to the G-protein coupled receptor 1 family. Adrenergic receptor subfamily. ADRA1A sub-subfamily. Homo- and heterooligomer. Heterooligomerizes with ADRA1B homooligomers in cardiac myocytes. Interacts with CAVIN4.

Its subcellular location is the nucleus membrane. It localises to the cell membrane. The protein localises to the cytoplasm. The protein resides in the membrane. It is found in the caveola. In terms of biological role, this alpha-adrenergic receptor mediates its action by association with G proteins that activate a phosphatidylinositol-calcium second messenger system. Its effect is mediated by G(q) and G(11) proteins. Nuclear ADRA1A-ADRA1B heterooligomers regulate phenylephrine (PE)-stimulated ERK signaling in cardiac myocytes. In Canis lupus familiaris (Dog), this protein is Alpha-1A adrenergic receptor (ADRA1A).